A 309-amino-acid polypeptide reads, in one-letter code: Serine/threonine-protein phosphatase 2A catalytic subunit alpha isoform (309 aa).

Residues Asp-57, His-59, Asp-85, and Asn-117 each contribute to the Mn(2+) site. Residues Asp-57, His-59, and Asp-85 each contribute to the Zn(2+) site. Fe(3+) is bound by residues Asp-85 and Asn-117. His-118 acts as the Proton donor in catalysis. His-167 and His-241 together coordinate Mn(2+). 2 residues coordinate Fe(3+): His-167 and His-241. Residue Tyr-307 is modified to Phosphotyrosine. At Leu-309 the chain carries Leucine methyl ester.

This sequence belongs to the PPP phosphatase family. PP-1 subfamily. As to quaternary structure, PP2A consists of a common heterodimeric core enzyme composed of PPP2CA, a 36 kDa catalytic subunit (subunit C), and PPP2R1A, a 65 kDa constant regulatory subunit (PR65 or subunit A), that associates with a variety of regulatory subunits. Proteins that associate with the core dimer include three families of regulatory subunits B (the R2/B/PR55/B55, R3/B''/PR72/PR130/PR59 and R5/B'/B56 families), the 48 kDa variable regulatory subunit, viral proteins, and cell signaling molecules. Interacts with the PP2A A subunit PPP2R1A. Interacts with the regulatory subunit PPP2R2A. Interacts (via C-terminus) with PTPA. Interacts with NXN; the interaction is direct. Interacts with KCTD20. Interacts with BTBD10. Interacts with SGO1 and SGO2. Interacts with RAF1. Interaction with IGBP1 protects unassembled PPP2CA from degradative ubiquitination. Interacts with GSK3B (via C2 domain). Interacts with MFHAS1; retains PPP2CA into the cytoplasm and excludes it from the nucleus. Interacts with PABIR1/FAM122A. Interacts with ADCY8; interaction is phosphatase activity-dependent; antagonizes interaction between ADCY8 and calmodulin. Interacts with CRTC3 (when phosphorylated at 'Ser-391'). Interacts with SPRY2; the interaction is inhibited by TESK1 interaction with SPRY2, possibly by vesicular sequestration of SPRY2. Interacts with TRAF3IP3. Interacts with AMBRA1 (via PxP motifs); enhancing interaction between PPP2CA and MYC or FOXO3. Forms a complex with AMBRA1 and BECN1; AMBRA1 and BECN1 components of the complex regulate MYC stability via different pathways. Part of the core of STRIPAK complexes composed of PP2A catalytic and scaffolding subunits, the striatins (PP2A regulatory subunits), the striatin-associated proteins MOB4, STRIP1 and STRIP2, PDCD10 and members of the STE20 kinases, such as STK24 and STK26. Phosphatase component of the Integrator-PP2A (INTAC) complex, composed of the Integrator core complex and protein phosphatase 2A subunits PPP2CA and PPP2R1A. Mn(2+) serves as cofactor. Requires Fe(3+) as cofactor. The cofactor is Zn(2+). Reversibly methyl esterified on Leu-309 by leucine carboxyl methyltransferase 1 (LCMT1) and protein phosphatase methylesterase 1 (PPME1). Carboxyl methylation influences the affinity of the catalytic subunit for the different regulatory subunits, thereby modulating the PP2A holoenzyme's substrate specificity, enzyme activity and cellular localization. In terms of processing, phosphorylation of either threonine (by autophosphorylation-activated protein kinase) or tyrosine results in inactivation of the phosphatase. Auto-dephosphorylation has been suggested as a mechanism for reactivation. Post-translationally, polyubiquitinated, leading to its degradation by the proteasome.

It localises to the cytoplasm. The protein localises to the nucleus. It is found in the chromosome. Its subcellular location is the centromere. The protein resides in the cytoskeleton. It localises to the spindle pole. It catalyses the reaction O-phospho-L-seryl-[protein] + H2O = L-seryl-[protein] + phosphate. The enzyme catalyses O-phospho-L-threonyl-[protein] + H2O = L-threonyl-[protein] + phosphate. Its activity is regulated as follows. Inhibited by the interaction between PPP2R2A and ARPP19; this inhibition is enhanced when ARPP19 is phosphorylated. Inhibited by the interaction between PPP2R2A and PABIR1/FAM122A. Its function is as follows. Catalytic subunit of protein phosphatase 2A (PP2A), a serine/threonine phosphatase involved in the regulation of a wide variety of enzymes, signal transduction pathways, and cellular events. PP2A is the major phosphatase for microtubule-associated proteins (MAPs). PP2A can modulate the activity of phosphorylase B kinase casein kinase 2, mitogen-stimulated S6 kinase, and MAP-2 kinase. Cooperates with SGO2 to protect centromeric cohesin from separase-mediated cleavage in oocytes specifically during meiosis I. Can dephosphorylate various proteins, such as SV40 large T antigen, AXIN1, p53/TP53, PIM3, WEE1. Activates RAF1 by dephosphorylating it at 'Ser-259'. Mediates dephosphorylation of WEE1, preventing its ubiquitin-mediated proteolysis, increasing WEE1 protein levels, and promoting the G2/M checkpoint. Mediates dephosphorylation of MYC; promoting its ubiquitin-mediated proteolysis: interaction with AMBRA1 enhances interaction between PPP2CA and MYC. Mediates dephosphorylation of FOXO3; promoting its stabilization: interaction with AMBRA1 enhances interaction between PPP2CA and FOXO3. Catalyzes dephosphorylation of the pyrin domain of NLRP3, promoting assembly of the NLRP3 inflammasome. Together with RACK1 adapter, mediates dephosphorylation of AKT1 at 'Ser-473', preventing AKT1 activation and AKT-mTOR signaling pathway. Dephosphorylation of AKT1 is essential for regulatory T-cells (Treg) homeostasis and stability. Catalyzes dephosphorylation of PIM3, promotinh PIM3 ubiquitination and proteasomal degradation. Part of the striatin-interacting phosphatase and kinase (STRIPAK) complexes. STRIPAK complexes have critical roles in protein (de)phosphorylation and are regulators of multiple signaling pathways including Hippo, MAPK, nuclear receptor and cytoskeleton remodeling. Different types of STRIPAK complexes are involved in a variety of biological processes such as cell growth, differentiation, apoptosis, metabolism and immune regulation. Key mediator of a quality checkpoint during transcription elongation as part of the Integrator-PP2A (INTAC) complex. The INTAC complex drives premature transcription termination of transcripts that are unfavorably configured for transcriptional elongation: within the INTAC complex, PPP2CA catalyzes dephosphorylation of the C-terminal domain (CTD) of Pol II subunit POLR2A/RPB1 and SUPT5H/SPT5, thereby preventing transcriptional elongation. The polypeptide is Serine/threonine-protein phosphatase 2A catalytic subunit alpha isoform (PPP2CA) (Homo sapiens (Human)).